Reading from the N-terminus, the 104-residue chain is Phosphocarrier protein HPr (104 aa).

One can recognise an HPr domain in the interval 17 to 104 (ELSAIFMIRN…EVFNSGFGEL (88 aa)). Residue H31 is the Pros-phosphohistidine intermediate of the active site.

It belongs to the HPr family.

It is found in the cytoplasm. In terms of biological role, general (non sugar-specific) component of the phosphoenolpyruvate-dependent sugar phosphotransferase system (sugar PTS). This major carbohydrate active-transport system catalyzes the phosphorylation of incoming sugar substrates concomitantly with their translocation across the cell membrane. The phosphoryl group from phosphoenolpyruvate (PEP) is transferred to the phosphoryl carrier protein HPr by enzyme I. Phospho-HPr then transfers it to the PTS EIIA domain. The protein is Phosphocarrier protein HPr (ptsH) of Chlamydia muridarum (strain MoPn / Nigg).